Reading from the N-terminus, the 762-residue chain is 5-methyltetrahydropteroyltriglutamate--homocysteine methyltransferase (762 aa).

Residues 17 to 20 and lysine 111 each bind 5-methyltetrahydropteroyltri-L-glutamate; that span reads REWK. Residues 435 to 437 and glutamate 488 contribute to the L-homocysteine site; that span reads IGS. Residues 435–437 and glutamate 488 contribute to the L-methionine site; that span reads IGS. Residues 519 to 520 and tryptophan 565 contribute to the 5-methyltetrahydropteroyltri-L-glutamate site; that span reads RC. Residue aspartate 603 coordinates L-homocysteine. Residue aspartate 603 coordinates L-methionine. Glutamate 609 contributes to the 5-methyltetrahydropteroyltri-L-glutamate binding site. 3 residues coordinate Zn(2+): histidine 645, cysteine 647, and glutamate 669. Histidine 698 serves as the catalytic Proton donor. Cysteine 730 provides a ligand contact to Zn(2+).

Belongs to the vitamin-B12 independent methionine synthase family. Requires Zn(2+) as cofactor.

It catalyses the reaction 5-methyltetrahydropteroyltri-L-glutamate + L-homocysteine = tetrahydropteroyltri-L-glutamate + L-methionine. Its pathway is amino-acid biosynthesis; L-methionine biosynthesis via de novo pathway; L-methionine from L-homocysteine (MetE route): step 1/1. In terms of biological role, catalyzes the transfer of a methyl group from 5-methyltetrahydrofolate to homocysteine resulting in methionine formation. The polypeptide is 5-methyltetrahydropteroyltriglutamate--homocysteine methyltransferase (Bacillus mycoides (strain KBAB4) (Bacillus weihenstephanensis)).